A 303-amino-acid chain; its full sequence is Coenzyme PQQ synthesis protein B (303 aa).

This sequence belongs to the PqqB family.

Its pathway is cofactor biosynthesis; pyrroloquinoline quinone biosynthesis. Its function is as follows. May be involved in the transport of PQQ or its precursor to the periplasm. In Pseudomonas putida (strain GB-1), this protein is Coenzyme PQQ synthesis protein B.